The primary structure comprises 138 residues: Large ribosomal subunit protein uL16 (138 aa).

Positions 1–15 (MLSPKKVKYRKKQRG) are enriched in basic residues. A disordered region spans residues 1 to 21 (MLSPKKVKYRKKQRGRLSGEA).

This sequence belongs to the universal ribosomal protein uL16 family. In terms of assembly, part of the 50S ribosomal subunit.

Functionally, binds 23S rRNA and is also seen to make contacts with the A and possibly P site tRNAs. The protein is Large ribosomal subunit protein uL16 of Borreliella burgdorferi (strain ATCC 35210 / DSM 4680 / CIP 102532 / B31) (Borrelia burgdorferi).